A 468-amino-acid chain; its full sequence is Putative proline/betaine transporter (468 aa).

12 consecutive transmembrane segments (helical) span residues 20-42 (VFATGIGNAMEWFDFGVYAYTTA), 63-83 (FAALAIAFLLRPIGGIVFGII), 91-111 (VVLTTTIILMALSTLTIGVLP), 115-135 (MIGLWAPALLLLARILQGFST), 164-184 (IGTLSGYIAASIMIALLSFFL), 191-211 (AWGWRIPFILGLFLGLFGLYL), 246-266 (ILVCFVAVVFFNVTNYTVTAY), 284-304 (VLITCVMAVMIPLALFFGKLA), 312-332 (VFLIGTGGLTLLSIVAFSLLN), 336-356 (LPFIILGVFILGFFLSTYEAT), 376-396 (VTFNISVSLFGGTTPLVNSWL), and 403-423 (IYAPAYYLTAISIIGFIVIAV).

This sequence belongs to the major facilitator superfamily. Metabolite:H+ Symporter (MHS) family (TC 2.A.1.6) family.

The protein localises to the cell membrane. Functionally, may be a proton symporter involved in the uptake of osmolytes such as proline and glycine betaine. This is Putative proline/betaine transporter (proP) from Staphylococcus haemolyticus (strain JCSC1435).